We begin with the raw amino-acid sequence, 150 residues long: Protein SprT-like (150 aa).

Residues 6-147 form the SprT-like domain; sequence LQKLTEDISE…CGKCRGKIKR (142 aa). Residue histidine 67 participates in Zn(2+) binding. Residue glutamate 68 is part of the active site. Zn(2+) is bound at residue histidine 71.

The protein belongs to the SprT family. The cofactor is Zn(2+).

It is found in the cytoplasm. In Bacillus subtilis (strain 168), this protein is Protein SprT-like (ydcK).